Here is a 102-residue protein sequence, read N- to C-terminus: Small ribosomal subunit protein uS10 (102 aa).

Belongs to the universal ribosomal protein uS10 family. As to quaternary structure, part of the 30S ribosomal subunit.

Functionally, involved in the binding of tRNA to the ribosomes. This is Small ribosomal subunit protein uS10 from Malacoplasma penetrans (strain HF-2) (Mycoplasma penetrans).